The primary structure comprises 518 residues: Gypsy retrotransposon integrase-like protein 1 (518 aa).

An Integrase catalytic domain is found at 135-293 (VVGNPWSVVT…PYFQMFNRNP (159 aa)). Positions 326–348 (NQTPAAGQMESSTSEELSKSKVA) are disordered. Serine 498 carries the phosphoserine modification.

In Rattus norvegicus (Rat), this protein is Gypsy retrotransposon integrase-like protein 1 (GIN1).